The chain runs to 261 residues: Cytochrome c oxidase subunit 3 (261 aa).

Over 1–15 (MTHQTHAYHMVNPSP) the chain is Mitochondrial matrix. A helical membrane pass occupies residues 16-34 (WPLTGALSALLMTSGLIMW). The Mitochondrial intermembrane portion of the chain corresponds to 35–40 (FHFNST). The chain crosses the membrane as a helical span at residues 41-66 (ALLTLGLTTNMLTMYQWWRDVIREST). Topologically, residues 67–72 (FQGHHT) are mitochondrial matrix. A helical transmembrane segment spans residues 73-105 (PAVQKGLRYGMILFIISEVLFFTGFFWAFYHSS). The Mitochondrial intermembrane segment spans residues 106 to 128 (LAPTPELGGCWPPTGIHPLNPLE). The helical transmembrane segment at 129-152 (VPLLNTSVLLASGVSITWAHHSLM) threads the bilayer. Residues 153–155 (EGN) lie on the Mitochondrial matrix side of the membrane. Residues 156–183 (RYHMLQALFITIALGVYFTLLQASEYYE) form a helical membrane-spanning segment. The Mitochondrial intermembrane portion of the chain corresponds to 184 to 190 (APFTISD). Residues 191-223 (GVYGSTFFVATGFHGLHVIIGSTFLIVCFFRQL) traverse the membrane as a helical segment. Over 224-232 (KFHFTSSHH) the chain is Mitochondrial matrix. A helical transmembrane segment spans residues 233–256 (FGFEAAAWYWHFVDVVWLFLYMSI). At 257–261 (YWWGS) the chain is on the mitochondrial intermembrane side.

Belongs to the cytochrome c oxidase subunit 3 family. As to quaternary structure, component of the cytochrome c oxidase (complex IV, CIV), a multisubunit enzyme composed of 14 subunits. The complex is composed of a catalytic core of 3 subunits MT-CO1, MT-CO2 and MT-CO3, encoded in the mitochondrial DNA, and 11 supernumerary subunits COX4I, COX5A, COX5B, COX6A, COX6B, COX6C, COX7A, COX7B, COX7C, COX8 and NDUFA4, which are encoded in the nuclear genome. The complex exists as a monomer or a dimer and forms supercomplexes (SCs) in the inner mitochondrial membrane with NADH-ubiquinone oxidoreductase (complex I, CI) and ubiquinol-cytochrome c oxidoreductase (cytochrome b-c1 complex, complex III, CIII), resulting in different assemblies (supercomplex SCI(1)III(2)IV(1) and megacomplex MCI(2)III(2)IV(2)).

Its subcellular location is the mitochondrion inner membrane. It carries out the reaction 4 Fe(II)-[cytochrome c] + O2 + 8 H(+)(in) = 4 Fe(III)-[cytochrome c] + 2 H2O + 4 H(+)(out). Functionally, component of the cytochrome c oxidase, the last enzyme in the mitochondrial electron transport chain which drives oxidative phosphorylation. The respiratory chain contains 3 multisubunit complexes succinate dehydrogenase (complex II, CII), ubiquinol-cytochrome c oxidoreductase (cytochrome b-c1 complex, complex III, CIII) and cytochrome c oxidase (complex IV, CIV), that cooperate to transfer electrons derived from NADH and succinate to molecular oxygen, creating an electrochemical gradient over the inner membrane that drives transmembrane transport and the ATP synthase. Cytochrome c oxidase is the component of the respiratory chain that catalyzes the reduction of oxygen to water. Electrons originating from reduced cytochrome c in the intermembrane space (IMS) are transferred via the dinuclear copper A center (CU(A)) of subunit 2 and heme A of subunit 1 to the active site in subunit 1, a binuclear center (BNC) formed by heme A3 and copper B (CU(B)). The BNC reduces molecular oxygen to 2 water molecules using 4 electrons from cytochrome c in the IMS and 4 protons from the mitochondrial matrix. The chain is Cytochrome c oxidase subunit 3 (MT-CO3) from Ovis aries (Sheep).